Here is a 540-residue protein sequence, read N- to C-terminus: Kinesin light chain (540 aa).

Residues 34–138 (LETSVKGVKE…NKHLKYMASI (105 aa)) are a coiled coil. TPR repeat units lie at residues 206-239 (LRTL…LEKT), 248-281 (ATML…REKC), 290-323 (AATL…REKV), 332-365 (AKQL…YESK), 374-407 (AKTK…AHER), and 456-489 (TTTL…KKQH).

This sequence belongs to the kinesin light chain family. Oligomeric complex composed of two heavy chains and two light chains. Interacts with unc-83; the interaction is direct. Interacts with unc-33; the interaction regulates unc-33 neurite localization. Interacts with casy-1.

The protein resides in the cytoplasm. The protein localises to the cytoskeleton. It localises to the nucleus envelope. Functionally, kinesin is a microtubule-associated force-producing protein that may play a role in organelle transport. The light chain may function in coupling of cargo to the heavy chain or in the modulation of its ATPase activity. Recruits unc-83 (within the unc-83-unc-84 LINC complex) to the nuclear envelope during nuclear migration to mediate the link between the nuclear envelope and the microtubule cytoskeleton in hypodermal precursor cells. The polypeptide is Kinesin light chain (Caenorhabditis elegans).